A 455-amino-acid polypeptide reads, in one-letter code: T-box protein VegT-B (455 aa).

The T-box DNA-binding region spans 57 to 230; it reads LWTQFHQEGT…HNPFAKGFRE (174 aa). The segment covering 229 to 241 has biased composition (basic and acidic residues); the sequence is REQERSHKRDDVL. Disordered regions lie at residues 229–276 and 295–350; these read REQE…RIKE and ANQG…RRLT. The segment covering 308-326 has biased composition (polar residues); that stretch reads GVNQEQQVPTSSSNFYIKS.

As to quaternary structure, forms a repression complex on the promoters of the nodal/nr1 and siamois genes with the maternal factors tcf7l1/tcf3 and pouf5.1/oct-25. Interacts (via C-terminus) with tcf7l1/tcf3 (via N-terminus). Also interacts with the other POU-domain transcription factors pou5f1.2/oct-91 and pou5f1.3/oct-60. In terms of tissue distribution, maternally localized to the vegetal hemisphere of oocytes. Zygotic expression parallels blastopore formation and shifts from dorsal expression in the marginal zone of late blastula and early gastrula stages to a ventral/lateral expression at later stages. During neurula and tailbud stages, expressed in the posterior and anterior ends of the embryo. During tailbud stages, expressed in a subset of interneurons in the neural tube.

The protein localises to the nucleus. Transcription factor required for both mesoderm and endoderm formation in the embryo; signaling determinants and concentration levels may determine which germ layer is formed. Acts together with beta-catenin to activate genes that are responsible for mesoderm induction including wnt-8, eomes t/bra, siamois, mix1 and sox17. Directly binds to promoter DNA. Patterns the mesoderm along the dorsoventral and posterior axis. Activates siamois gene transcription when alone or in combination with beta-catenin, but inhibits siamois transcription in combination with pou5f1.1/oct-25. This is T-box protein VegT-B (vegt-b) from Xenopus laevis (African clawed frog).